The sequence spans 444 residues: Nuclear distribution protein nudF (444 aa).

In terms of domain architecture, LisH spans 9 to 41 (QAEALHKAMLAYLSVINAPQTAETLREELHFDE). Residues 60 to 88 (TGIARLQRRINDLEAEVRSLQAELEASPS) are a coiled coil. A disordered region spans residues 83 to 107 (LEASPSAARAKNQDPTNWLPKPSST). 7 WD repeats span residues 112-153 (SHRD…RTLK), 155-195 (HIRG…ANIR), 199-239 (GHDH…CVKV), 243-282 (ATESWIRDVSPSFDGKWLVSGGRDQAITVWEVSSAEPKAA), 285-345 (GHEN…IKTL), 347-386 (GHDNWVRGLVFHPGGKYLFSVSDDKTIRCWDLSQEGRLVK), and 391-437 (AHEH…GCAD).

The protein belongs to the WD repeat LIS1/nudF family. In terms of assembly, interacts with dynein. Self-associates. Interacts with bnfA, nudC and nudE.

It localises to the cytoplasm. Its subcellular location is the cytoskeleton. The protein resides in the spindle pole. Positively regulates the activity of the minus-end directed microtubule motor protein dynein. May enhance dynein-mediated microtubule sliding by targeting dynein to the microtubule plus end. Required for nuclear migration during vegetative growth as well as development. Required for retrograde early endosome (EE) transport from the hyphal tip. Required for localization of dynein to the mitotic spindle poles. Recruits additional proteins to the dynein complex at SPBs. The chain is Nuclear distribution protein nudF from Emericella nidulans (strain FGSC A4 / ATCC 38163 / CBS 112.46 / NRRL 194 / M139) (Aspergillus nidulans).